We begin with the raw amino-acid sequence, 338 residues long: Probable dual-specificity RNA methyltransferase RlmN (338 aa).

E89 functions as the Proton acceptor in the catalytic mechanism. Residues 95 to 325 (HNYGMSACVT…AILRKEQGHD (231 aa)) form the Radical SAM core domain. The cysteines at positions 102 and 330 are disulfide-linked. [4Fe-4S] cluster-binding residues include C109, C113, and C116. Residues 156-157 (GE), S188, 211-213 (SLH), and N287 contribute to the S-adenosyl-L-methionine site. C330 serves as the catalytic S-methylcysteine intermediate.

This sequence belongs to the radical SAM superfamily. RlmN family. The cofactor is [4Fe-4S] cluster.

Its subcellular location is the cytoplasm. It carries out the reaction adenosine(2503) in 23S rRNA + 2 reduced [2Fe-2S]-[ferredoxin] + 2 S-adenosyl-L-methionine = 2-methyladenosine(2503) in 23S rRNA + 5'-deoxyadenosine + L-methionine + 2 oxidized [2Fe-2S]-[ferredoxin] + S-adenosyl-L-homocysteine. The enzyme catalyses adenosine(37) in tRNA + 2 reduced [2Fe-2S]-[ferredoxin] + 2 S-adenosyl-L-methionine = 2-methyladenosine(37) in tRNA + 5'-deoxyadenosine + L-methionine + 2 oxidized [2Fe-2S]-[ferredoxin] + S-adenosyl-L-homocysteine. Specifically methylates position 2 of adenine 2503 in 23S rRNA and position 2 of adenine 37 in tRNAs. This is Probable dual-specificity RNA methyltransferase RlmN from Acholeplasma laidlawii (strain PG-8A).